We begin with the raw amino-acid sequence, 173 residues long: Flavodoxin 2 (173 aa).

The region spanning 3-165 (MGLFYGSSTC…RIQTWCEQIL (163 aa)) is the Flavodoxin-like domain.

Belongs to the flavodoxin family. The cofactor is FMN.

Functionally, low-potential electron donor to a number of redox enzymes. The protein is Flavodoxin 2 (fldB) of Salmonella typhi.